Here is a 138-residue protein sequence, read N- to C-terminus: Gamma-glutamylaminecyclotransferase (138 aa).

Glu63 (proton acceptor) is an active-site residue.

Belongs to the gamma-glutamylcyclotransferase family.

It catalyses the reaction epsilon-(gamma-L-glutamyl)-L-lysine = 5-oxo-L-proline + L-lysine. In terms of biological role, may contribute to degradation of proteins cross-linked by transglutaminases by degrading the cross-link between a lysine and a glutamic acid residue. Catalyzes the formation of 5-oxo-L-proline from L-gamma-glutamyl-L-epsilon-lysine. This is Gamma-glutamylaminecyclotransferase (ggact) from Xenopus laevis (African clawed frog).